The sequence spans 345 residues: MSNTQLSYKDAGVDIHAGNELVERIKGDVKRTRRPEVMGGLGGFGALCALPTKYKEPILVSGTDGVGTKLRLAIDLNKHDTIGQDLVAMCVNDLVVQGAEPLFFLDYYATGKLEVDVAADVIKGIADGCEISGCALVGGETAEMPGMYHEGDYDLAGFCVGVVEKSEIIDGSAVKAGDVLLALASSGPHSNGYSLIRKVIEVSGANPATDTLEGKPLSEHLLAPTKIYVKSVLQLIKQADVHAIAHLTGGGFWENIPRVLPATAKAVIDEKSWEWPAAFKWLQEKGNISRYEMYRTFNCGVGMVIALPEKDIETALAVLKQAGENAWVIGKIENLGEGSEQVEII.

The protein belongs to the AIR synthase family.

The protein localises to the cytoplasm. It catalyses the reaction 2-formamido-N(1)-(5-O-phospho-beta-D-ribosyl)acetamidine + ATP = 5-amino-1-(5-phospho-beta-D-ribosyl)imidazole + ADP + phosphate + H(+). It participates in purine metabolism; IMP biosynthesis via de novo pathway; 5-amino-1-(5-phospho-D-ribosyl)imidazole from N(2)-formyl-N(1)-(5-phospho-D-ribosyl)glycinamide: step 2/2. This chain is Phosphoribosylformylglycinamidine cyclo-ligase, found in Actinobacillus pleuropneumoniae serotype 5b (strain L20).